We begin with the raw amino-acid sequence, 377 residues long: Succinyl-diaminopimelate desuccinylase (377 aa).

Zn(2+) is bound at residue H66. D68 is an active-site residue. D99 lines the Zn(2+) pocket. Catalysis depends on E133, which acts as the Proton acceptor. Zn(2+) is bound by residues E134, E162, and H348.

Belongs to the peptidase M20A family. DapE subfamily. Homodimer. Zn(2+) serves as cofactor. The cofactor is Co(2+).

The catalysed reaction is N-succinyl-(2S,6S)-2,6-diaminopimelate + H2O = (2S,6S)-2,6-diaminopimelate + succinate. Its pathway is amino-acid biosynthesis; L-lysine biosynthesis via DAP pathway; LL-2,6-diaminopimelate from (S)-tetrahydrodipicolinate (succinylase route): step 3/3. Catalyzes the hydrolysis of N-succinyl-L,L-diaminopimelic acid (SDAP), forming succinate and LL-2,6-diaminopimelate (DAP), an intermediate involved in the bacterial biosynthesis of lysine and meso-diaminopimelic acid, an essential component of bacterial cell walls. This chain is Succinyl-diaminopimelate desuccinylase, found in Methylococcus capsulatus (strain ATCC 33009 / NCIMB 11132 / Bath).